The chain runs to 177 residues: Large ribosomal subunit protein uL6 (177 aa).

Belongs to the universal ribosomal protein uL6 family. Part of the 50S ribosomal subunit.

In terms of biological role, this protein binds to the 23S rRNA, and is important in its secondary structure. It is located near the subunit interface in the base of the L7/L12 stalk, and near the tRNA binding site of the peptidyltransferase center. The chain is Large ribosomal subunit protein uL6 from Sodalis glossinidius (strain morsitans).